The sequence spans 377 residues: Nitric oxide reductase FlRd-NAD(+) reductase (377 aa).

The protein belongs to the FAD-dependent oxidoreductase family. It depends on FAD as a cofactor.

The protein resides in the cytoplasm. It catalyses the reaction 2 reduced [nitric oxide reductase rubredoxin domain] + NAD(+) + H(+) = 2 oxidized [nitric oxide reductase rubredoxin domain] + NADH. Its pathway is nitrogen metabolism; nitric oxide reduction. One of at least two accessory proteins for anaerobic nitric oxide (NO) reductase. Reduces the rubredoxin moiety of NO reductase. This chain is Nitric oxide reductase FlRd-NAD(+) reductase, found in Escherichia coli O157:H7.